A 207-amino-acid polypeptide reads, in one-letter code: N-(5'-phosphoribosyl)anthranilate isomerase (207 aa).

The protein belongs to the TrpF family.

It carries out the reaction N-(5-phospho-beta-D-ribosyl)anthranilate = 1-(2-carboxyphenylamino)-1-deoxy-D-ribulose 5-phosphate. It functions in the pathway amino-acid biosynthesis; L-tryptophan biosynthesis; L-tryptophan from chorismate: step 3/5. This Legionella pneumophila (strain Lens) protein is N-(5'-phosphoribosyl)anthranilate isomerase.